Consider the following 184-residue polypeptide: MIEHNPTTIYGTTIVTVRKDGKVVIAGDGQVSLGNTVMKGNARKVRRIGKGNVIAGFAGATADAFTLLERLEAKLEQYPDQLMRASVELAKDWRTDRYLRKLEAMMLVADSKATLALTGTGDVLEPEQGVMAIGSGGNYALAAARALIETDKSAEEIARKAMNIAADICIYTNHNIIVESLDAQ.

The active site involves T12. Positions 166, 169, and 172 each coordinate Na(+).

It belongs to the peptidase T1B family. HslV subfamily. As to quaternary structure, a double ring-shaped homohexamer of HslV is capped on each side by a ring-shaped HslU homohexamer. The assembly of the HslU/HslV complex is dependent on binding of ATP.

It is found in the cytoplasm. It catalyses the reaction ATP-dependent cleavage of peptide bonds with broad specificity.. Its activity is regulated as follows. Allosterically activated by HslU binding. Protease subunit of a proteasome-like degradation complex believed to be a general protein degrading machinery. The polypeptide is ATP-dependent protease subunit HslV (Brucella ovis (strain ATCC 25840 / 63/290 / NCTC 10512)).